The sequence spans 188 residues: NANOG neighbor homeobox (188 aa).

A disordered region spans residues 28-106 (ETILANKKQS…NEKQKQYPEK (79 aa)). The segment covering 57-106 (QNGKQKWREEGEAGRKREREKEEKNEKELQDEQENKRKRENEKQKQYPEK) has biased composition (basic and acidic residues). A DNA-binding region (homeobox) is located at residues 102-161 (QYPEKRLVSKSLMHTLWAKFKLNRCPTIQESLSLSFEFDMTHKQISQWFCKTRKKYNKEM).

It is found in the nucleus. This chain is NANOG neighbor homeobox (NANOGNB), found in Homo sapiens (Human).